We begin with the raw amino-acid sequence, 139 residues long: D-ribose pyranase (139 aa).

The active-site Proton donor is the H20. Residues D28, H106, and Y128–N130 each bind substrate.

The protein belongs to the RbsD / FucU family. RbsD subfamily. As to quaternary structure, homodecamer.

The protein localises to the cytoplasm. The catalysed reaction is beta-D-ribopyranose = beta-D-ribofuranose. Its pathway is carbohydrate metabolism; D-ribose degradation; D-ribose 5-phosphate from beta-D-ribopyranose: step 1/2. Catalyzes the interconversion of beta-pyran and beta-furan forms of D-ribose. This Serratia proteamaculans (strain 568) protein is D-ribose pyranase.